The sequence spans 152 residues: Methylglyoxal synthase (152 aa).

Residues 6-152 (RTIPAQKHIA…YQRYLQDRLK (147 aa)) enclose the MGS-like domain. Substrate is bound by residues H19, K23, 45–48 (TGTT), and 65–66 (SG). The Proton donor/acceptor role is filled by D71. Position 98 (H98) interacts with substrate.

Belongs to the methylglyoxal synthase family.

It carries out the reaction dihydroxyacetone phosphate = methylglyoxal + phosphate. Its function is as follows. Catalyzes the formation of methylglyoxal from dihydroxyacetone phosphate. The chain is Methylglyoxal synthase from Pectobacterium atrosepticum (strain SCRI 1043 / ATCC BAA-672) (Erwinia carotovora subsp. atroseptica).